Reading from the N-terminus, the 425-residue chain is Probable aminotransferase tcpI (425 aa).

Lysine 256 carries the N6-(pyridoxal phosphate)lysine modification.

This sequence belongs to the class-I pyridoxal-phosphate-dependent aminotransferase family. Pyridoxal 5'-phosphate serves as cofactor.

It participates in secondary metabolite biosynthesis. Functionally, probable aminotransferase; part of the gene cluster that mediates the biosynthesis of an unusual class of epipolythiodioxopiperazines (ETPs) lacking the reactive thiol group important for toxicity. Firstly, L-tyrosine is prenylated by tcpD, before undergoing condensation with L-glycine in a reaction catalyzed by the NRPS tcpP leading to the diketopiperazine (DKP) backbone. Afterwards the alpha-carbon of tyrosine is oxidized by the cytochrome P450 tcpC to form a hydroxyl group. However, in contrast other ETP biosynthesis pathways studied so far, tcpC is not able to bishydroxylate the DKP at both alpha-carbon positions, but hydroxylates the alpha-carbon of the tyrosine part and the nitrogen of the glycine part. The next steps involve an alpha,beta-elimination reaction catalyzed by tcpI, a methylation by the methyltransferase tcpN the action of the four enzyme cascade tcpG/K/J/I. Due to a dysfunctional cytochrome P450 monooxygenase tcpC, the pathway leads to the biosynthesis of probable non-toxic metabolites lacking the reactive thiol group. This is Probable aminotransferase tcpI from Claviceps purpurea (strain 20.1) (Ergot fungus).